We begin with the raw amino-acid sequence, 494 residues long: Protein nucleotidyltransferase YdiU (494 aa).

The ATP site is built by Gly90, Gly92, Arg93, Lys113, Asp125, Gly126, Arg176, and Arg183. Asp252 serves as the catalytic Proton acceptor. Positions 253 and 262 each coordinate Mg(2+). Asp262 contributes to the ATP binding site.

It belongs to the SELO family. Mg(2+) is required as a cofactor. It depends on Mn(2+) as a cofactor.

The enzyme catalyses L-seryl-[protein] + ATP = 3-O-(5'-adenylyl)-L-seryl-[protein] + diphosphate. It catalyses the reaction L-threonyl-[protein] + ATP = 3-O-(5'-adenylyl)-L-threonyl-[protein] + diphosphate. The catalysed reaction is L-tyrosyl-[protein] + ATP = O-(5'-adenylyl)-L-tyrosyl-[protein] + diphosphate. It carries out the reaction L-histidyl-[protein] + UTP = N(tele)-(5'-uridylyl)-L-histidyl-[protein] + diphosphate. The enzyme catalyses L-seryl-[protein] + UTP = O-(5'-uridylyl)-L-seryl-[protein] + diphosphate. It catalyses the reaction L-tyrosyl-[protein] + UTP = O-(5'-uridylyl)-L-tyrosyl-[protein] + diphosphate. Its function is as follows. Nucleotidyltransferase involved in the post-translational modification of proteins. It can catalyze the addition of adenosine monophosphate (AMP) or uridine monophosphate (UMP) to a protein, resulting in modifications known as AMPylation and UMPylation. This Alkalilimnicola ehrlichii (strain ATCC BAA-1101 / DSM 17681 / MLHE-1) protein is Protein nucleotidyltransferase YdiU.